Here is a 989-residue protein sequence, read N- to C-terminus: Phosphoenolpyruvate carboxylase (989 aa).

Residues histidine 175 and lysine 630 contribute to the active site.

This sequence belongs to the PEPCase type 1 family. It depends on Mg(2+) as a cofactor.

The enzyme catalyses oxaloacetate + phosphate = phosphoenolpyruvate + hydrogencarbonate. Its function is as follows. Forms oxaloacetate, a four-carbon dicarboxylic acid source for the tricarboxylic acid cycle. This chain is Phosphoenolpyruvate carboxylase, found in Prochlorococcus marinus subsp. pastoris (strain CCMP1986 / NIES-2087 / MED4).